Here is a 456-residue protein sequence, read N- to C-terminus: Dihydroorotase (456 aa).

Zn(2+)-binding residues include H60 and H62. Substrate is bound by residues 62 to 64 (HFR) and N94. E146, H180, H234, and D313 together coordinate Zn(2+). D313 is a catalytic residue. H317 contacts substrate.

Belongs to the metallo-dependent hydrolases superfamily. DHOase family. Class I DHOase subfamily. Requires Zn(2+) as cofactor.

It catalyses the reaction (S)-dihydroorotate + H2O = N-carbamoyl-L-aspartate + H(+). The protein operates within pyrimidine metabolism; UMP biosynthesis via de novo pathway; (S)-dihydroorotate from bicarbonate: step 3/3. Functionally, catalyzes the reversible cyclization of carbamoyl aspartate to dihydroorotate. This is Dihydroorotase from Methanosarcina mazei (strain ATCC BAA-159 / DSM 3647 / Goe1 / Go1 / JCM 11833 / OCM 88) (Methanosarcina frisia).